The following is a 457-amino-acid chain: Oxygen-independent coproporphyrinogen III oxidase (457 aa).

The region spanning 47–280 is the Radical SAM core domain; the sequence is RYPERPLSLY…QETIVSLTQA (234 aa). Tyr-56 serves as a coordination point for S-adenosyl-L-methionine. Residues Cys-62 and Cys-66 each contribute to the [4Fe-4S] cluster site. Position 68 (Phe-68) interacts with S-adenosyl-L-methionine. Cys-69 serves as a coordination point for [4Fe-4S] cluster. Residues Gly-112, 113 to 114, Glu-145, Gln-172, Arg-184, Asp-209, Ala-243, and Ile-329 each bind S-adenosyl-L-methionine; that span reads GT.

Belongs to the anaerobic coproporphyrinogen-III oxidase family. In terms of assembly, monomer. [4Fe-4S] cluster serves as cofactor.

Its subcellular location is the cytoplasm. The catalysed reaction is coproporphyrinogen III + 2 S-adenosyl-L-methionine = protoporphyrinogen IX + 2 5'-deoxyadenosine + 2 L-methionine + 2 CO2. It functions in the pathway porphyrin-containing compound metabolism; protoporphyrin-IX biosynthesis; protoporphyrinogen-IX from coproporphyrinogen-III (AdoMet route): step 1/1. Its function is as follows. Involved in the heme biosynthesis. Catalyzes the anaerobic oxidative decarboxylation of propionate groups of rings A and B of coproporphyrinogen III to yield the vinyl groups in protoporphyrinogen IX. The polypeptide is Oxygen-independent coproporphyrinogen III oxidase (hemN) (Salmonella typhi).